We begin with the raw amino-acid sequence, 180 residues long: Large ribosomal subunit protein uL5 (180 aa).

Belongs to the universal ribosomal protein uL5 family. As to quaternary structure, part of the 50S ribosomal subunit; part of the 5S rRNA/L5/L18/L25 subcomplex. Contacts the 5S rRNA and the P site tRNA. Forms a bridge to the 30S subunit in the 70S ribosome.

Its function is as follows. This is one of the proteins that bind and probably mediate the attachment of the 5S RNA into the large ribosomal subunit, where it forms part of the central protuberance. In the 70S ribosome it contacts protein S13 of the 30S subunit (bridge B1b), connecting the 2 subunits; this bridge is implicated in subunit movement. Contacts the P site tRNA; the 5S rRNA and some of its associated proteins might help stabilize positioning of ribosome-bound tRNAs. This chain is Large ribosomal subunit protein uL5, found in Lactiplantibacillus plantarum (strain ATCC BAA-793 / NCIMB 8826 / WCFS1) (Lactobacillus plantarum).